We begin with the raw amino-acid sequence, 254 residues long: 5'/3'-nucleotidase SurE (254 aa).

Residues Asp8, Asp9, Ser39, and Asn92 each contribute to the a divalent metal cation site.

The protein belongs to the SurE nucleotidase family. Requires a divalent metal cation as cofactor.

Its subcellular location is the cytoplasm. It catalyses the reaction a ribonucleoside 5'-phosphate + H2O = a ribonucleoside + phosphate. It carries out the reaction a ribonucleoside 3'-phosphate + H2O = a ribonucleoside + phosphate. The catalysed reaction is [phosphate](n) + H2O = [phosphate](n-1) + phosphate + H(+). In terms of biological role, nucleotidase with a broad substrate specificity as it can dephosphorylate various ribo- and deoxyribonucleoside 5'-monophosphates and ribonucleoside 3'-monophosphates with highest affinity to 3'-AMP. Also hydrolyzes polyphosphate (exopolyphosphatase activity) with the preference for short-chain-length substrates (P20-25). Might be involved in the regulation of dNTP and NTP pools, and in the turnover of 3'-mononucleotides produced by numerous intracellular RNases (T1, T2, and F) during the degradation of various RNAs. The protein is 5'/3'-nucleotidase SurE of Edwardsiella ictaluri (strain 93-146).